The sequence spans 312 residues: Olfactory receptor 6C68 (312 aa).

The Extracellular portion of the chain corresponds to 1–23 (MRKHTAITTFILLGLTEDPQLQV). A helical membrane pass occupies residues 24 to 44 (LLFMFLFITYMLSVTGKLTII). Residues 45–55 (ALTMLDPHLKT) are Cytoplasmic-facing. A helical transmembrane segment spans residues 56–76 (PMYFFLQNLSFLEISFTATCV). The Extracellular portion of the chain corresponds to 77–95 (PRFLYSISTGNKIITYNAC). Cys-95 and Cys-177 are oxidised to a cystine. The chain crosses the membrane as a helical span at residues 96–116 (VIQLFFADLFGVTEFFLLATM). Residues 117 to 143 (SYDRYVAICKPLHYMAIMSNKVCKTMV) lie on the Cytoplasmic side of the membrane. A helical membrane pass occupies residues 144 to 164 (ICCWMAALMIILPPLSLGFHL). Residues 165–197 (EFCDSNVINHFGCDALPILKIPCSDTSLIEQMV) lie on the Extracellular side of the membrane. A helical membrane pass occupies residues 198 to 218 (VASAVLTFIITLVCVVLSYTY). The Cytoplasmic segment spans residues 219–239 (IIRTILKFPSVQQKKKAFSTC). A helical transmembrane segment spans residues 240–260 (SSHITVVSITYGSCIFIYIKP). Residues 261–271 (SAKEEVNINKG) lie on the Extracellular side of the membrane. The chain crosses the membrane as a helical span at residues 272–292 (VSVLISSISPMLNSFIYTLRN). Over 293-312 (EQVKQAFHDSLKKIAFRLKK) the chain is Cytoplasmic.

Belongs to the G-protein coupled receptor 1 family.

The protein localises to the cell membrane. Functionally, odorant receptor. The polypeptide is Olfactory receptor 6C68 (OR6C68) (Homo sapiens (Human)).